A 385-amino-acid chain; its full sequence is UPF0284 protein P9215_05181 (385 aa).

The protein belongs to the UPF0284 family.

This is UPF0284 protein P9215_05181 from Prochlorococcus marinus (strain MIT 9215).